Here is a 311-residue protein sequence, read N- to C-terminus: MSKNQEISKKEQYNLNKLQKRLRRNVGEAIADFNMIEEGDRIMVCLSGGKDSYTMLEILRNLQQSAPINFSLVAVNLDQKQPGFPEHVLPEYLEKLGVEYKIVEENTYGIVKEKIPEGKTTCSLCSRLRRGILYRTATELGATKIALGHHRDDILQTLFLNMFYGGKMKGMPPKLMSDDGKHIVIRPLAYCREKDIQRFADAKAFPIIPCNLCGSQPNLQRQVIADMLRDWDKRYPGRIETMFSAMQNVVPSHLCDTNLFDFKGITHGSEVVNRGDLAFDREEIPLQPAGWQPEEDENQLDELRLNVVEVK.

Residues 47 to 52 carry the PP-loop motif motif; the sequence is SGGKDS. [4Fe-4S] cluster contacts are provided by Cys-122, Cys-125, and Cys-213.

It belongs to the TtcA family. Homodimer. Mg(2+) serves as cofactor. It depends on [4Fe-4S] cluster as a cofactor.

The protein resides in the cytoplasm. It carries out the reaction cytidine(32) in tRNA + S-sulfanyl-L-cysteinyl-[cysteine desulfurase] + AH2 + ATP = 2-thiocytidine(32) in tRNA + L-cysteinyl-[cysteine desulfurase] + A + AMP + diphosphate + H(+). The protein operates within tRNA modification. Its function is as follows. Catalyzes the ATP-dependent 2-thiolation of cytidine in position 32 of tRNA, to form 2-thiocytidine (s(2)C32). The sulfur atoms are provided by the cysteine/cysteine desulfurase (IscS) system. This Escherichia coli O7:K1 (strain IAI39 / ExPEC) protein is tRNA-cytidine(32) 2-sulfurtransferase.